We begin with the raw amino-acid sequence, 88 residues long: Small ribosomal subunit protein bS16 (88 aa).

This sequence belongs to the bacterial ribosomal protein bS16 family.

This chain is Small ribosomal subunit protein bS16, found in Thermus aquaticus.